Here is a 377-residue protein sequence, read N- to C-terminus: Probable staphylococcal-like nuclease CAN3 (377 aa).

Glycine 2 carries the N-myristoyl glycine lipid modification. The S-palmitoyl cysteine moiety is linked to residue cysteine 7. Positions 15–57 (GDHYPYYKPTSRPHYQPPHYHGQPAAPPAPPQQQPLGPHGVTP) are disordered. Over residues 27-38 (PHYQPPHYHGQP) the composition is skewed to low complexity. The TNase-like domain occupies 177 to 353 (NTLPVYDKCI…KAANRGLWAS (177 aa)). Aspartate 190 contacts Ca(2+). The active site involves arginine 260. Position 265 (aspartate 265) interacts with Ca(2+). Active-site residues include glutamate 268 and arginine 302.

Belongs to the thermonuclease family. It depends on Ca(2+) as a cofactor.

Its subcellular location is the cell membrane. Functionally, enzyme that catalyzes the hydrolysis of both DNA and RNA at the 5' position of the phosphodiester bond. This is Probable staphylococcal-like nuclease CAN3 from Oryza sativa subsp. japonica (Rice).